A 193-amino-acid chain; its full sequence is Leucyl/phenylalanyl-tRNA--protein transferase (193 aa).

This sequence belongs to the L/F-transferase family.

Its subcellular location is the cytoplasm. It carries out the reaction N-terminal L-lysyl-[protein] + L-leucyl-tRNA(Leu) = N-terminal L-leucyl-L-lysyl-[protein] + tRNA(Leu) + H(+). It catalyses the reaction N-terminal L-arginyl-[protein] + L-leucyl-tRNA(Leu) = N-terminal L-leucyl-L-arginyl-[protein] + tRNA(Leu) + H(+). The enzyme catalyses L-phenylalanyl-tRNA(Phe) + an N-terminal L-alpha-aminoacyl-[protein] = an N-terminal L-phenylalanyl-L-alpha-aminoacyl-[protein] + tRNA(Phe). Functions in the N-end rule pathway of protein degradation where it conjugates Leu, Phe and, less efficiently, Met from aminoacyl-tRNAs to the N-termini of proteins containing an N-terminal arginine or lysine. The sequence is that of Leucyl/phenylalanyl-tRNA--protein transferase from Akkermansia muciniphila (strain ATCC BAA-835 / DSM 22959 / JCM 33894 / BCRC 81048 / CCUG 64013 / CIP 107961 / Muc).